The chain runs to 439 residues: FBD-associated F-box protein At5g56380 (439 aa).

In terms of domain architecture, F-box spans 1–61 (MDRISHLADE…LPETWGYQEP (61 aa)). Residues 358 to 406 (WNQPGSVPRCLSSSLETLEWVEYGGTHEEKELSTYLFKTAVCFKKASFT) form the FBD domain.

The sequence is that of FBD-associated F-box protein At5g56380 from Arabidopsis thaliana (Mouse-ear cress).